The following is a 294-amino-acid chain: RAB7A-interacting MON1-CCZ1 complex subunit 1 (294 aa).

Residue A2 is modified to N-acetylalanine.

It belongs to the RIMOC1 family. In terms of assembly, interacts with the MON1A-CCZ1B complex. Interacts with GDP-bound RAB7A and promotes its interaction with the MON1A-CCZ1B complex.

The protein resides in the cytoplasm. It localises to the cytosol. Functionally, plays an important role in the removal of damaged mitochondria via mitophagy by controlling the stability and localization of RAB7A. Required for the recruitment of RAB7A and ATG9A vesicles to damaged mitochondria and promotes the stability of RAB7A by inhibiting its proteasomal degradation during mitophagy. The polypeptide is RAB7A-interacting MON1-CCZ1 complex subunit 1 (Homo sapiens (Human)).